A 149-amino-acid chain; its full sequence is Large ribosomal subunit protein uL13 (149 aa).

It belongs to the universal ribosomal protein uL13 family. In terms of assembly, part of the 50S ribosomal subunit.

In terms of biological role, this protein is one of the early assembly proteins of the 50S ribosomal subunit, although it is not seen to bind rRNA by itself. It is important during the early stages of 50S assembly. The sequence is that of Large ribosomal subunit protein uL13 from Borrelia hermsii (strain HS1 / DAH).